The chain runs to 362 residues: Histidinol-phosphate aminotransferase 2 (362 aa).

At Lys222 the chain carries N6-(pyridoxal phosphate)lysine.

It belongs to the class-II pyridoxal-phosphate-dependent aminotransferase family. Histidinol-phosphate aminotransferase subfamily. In terms of assembly, homodimer. It depends on pyridoxal 5'-phosphate as a cofactor.

It catalyses the reaction L-histidinol phosphate + 2-oxoglutarate = 3-(imidazol-4-yl)-2-oxopropyl phosphate + L-glutamate. It participates in amino-acid biosynthesis; L-histidine biosynthesis; L-histidine from 5-phospho-alpha-D-ribose 1-diphosphate: step 7/9. The protein is Histidinol-phosphate aminotransferase 2 of Carboxydothermus hydrogenoformans (strain ATCC BAA-161 / DSM 6008 / Z-2901).